Reading from the N-terminus, the 319-residue chain is UDP-3-O-acylglucosamine N-acyltransferase (319 aa).

The active-site Proton acceptor is histidine 230.

It belongs to the transferase hexapeptide repeat family. LpxD subfamily. Homotrimer.

It catalyses the reaction a UDP-3-O-[(3R)-3-hydroxyacyl]-alpha-D-glucosamine + a (3R)-hydroxyacyl-[ACP] = a UDP-2-N,3-O-bis[(3R)-3-hydroxyacyl]-alpha-D-glucosamine + holo-[ACP] + H(+). Its pathway is bacterial outer membrane biogenesis; LPS lipid A biosynthesis. Catalyzes the N-acylation of UDP-3-O-acylglucosamine using 3-hydroxyacyl-ACP as the acyl donor. Is involved in the biosynthesis of lipid A, a phosphorylated glycolipid that anchors the lipopolysaccharide to the outer membrane of the cell. In Campylobacter lari (strain RM2100 / D67 / ATCC BAA-1060), this protein is UDP-3-O-acylglucosamine N-acyltransferase.